The sequence spans 124 residues: Small ribosomal subunit protein uS13 (124 aa).

The disordered stretch occupies residues L96–K124.

Belongs to the universal ribosomal protein uS13 family. Part of the 30S ribosomal subunit. Forms a loose heterodimer with protein S19. Forms two bridges to the 50S subunit in the 70S ribosome.

Its function is as follows. Located at the top of the head of the 30S subunit, it contacts several helices of the 16S rRNA. In the 70S ribosome it contacts the 23S rRNA (bridge B1a) and protein L5 of the 50S subunit (bridge B1b), connecting the 2 subunits; these bridges are implicated in subunit movement. Contacts the tRNAs in the A and P-sites. This chain is Small ribosomal subunit protein uS13, found in Symbiobacterium thermophilum (strain DSM 24528 / JCM 14929 / IAM 14863 / T).